The chain runs to 586 residues: Phosphoenolpyruvate-protein phosphotransferase (586 aa).

Residue His201 is the Tele-phosphohistidine intermediate of the active site. 2 residues coordinate phosphoenolpyruvate: Arg308 and Arg345. Mg(2+) contacts are provided by Glu446 and Asp470. Phosphoenolpyruvate-binding positions include 469 to 470 (ND) and Arg480. Cys517 acts as the Proton donor in catalysis.

It belongs to the PEP-utilizing enzyme family. As to quaternary structure, homodimer. Requires Mg(2+) as cofactor.

It localises to the cytoplasm. It catalyses the reaction L-histidyl-[protein] + phosphoenolpyruvate = N(pros)-phospho-L-histidyl-[protein] + pyruvate. General (non sugar-specific) component of the phosphoenolpyruvate-dependent sugar phosphotransferase system (sugar PTS). This major carbohydrate active-transport system catalyzes the phosphorylation of incoming sugar substrates concomitantly with their translocation across the cell membrane. Enzyme I transfers the phosphoryl group from phosphoenolpyruvate (PEP) to the phosphoryl carrier protein (HPr). The protein is Phosphoenolpyruvate-protein phosphotransferase of Cupriavidus necator (strain ATCC 17699 / DSM 428 / KCTC 22496 / NCIMB 10442 / H16 / Stanier 337) (Ralstonia eutropha).